A 416-amino-acid chain; its full sequence is Histidine--tRNA ligase (416 aa).

This sequence belongs to the class-II aminoacyl-tRNA synthetase family.

It localises to the cytoplasm. The catalysed reaction is tRNA(His) + L-histidine + ATP = L-histidyl-tRNA(His) + AMP + diphosphate + H(+). This Methanococcus maripaludis (strain DSM 14266 / JCM 13030 / NBRC 101832 / S2 / LL) protein is Histidine--tRNA ligase.